A 158-amino-acid polypeptide reads, in one-letter code: Cyclic pyranopterin monophosphate synthase (158 aa).

Residues methionine 76–histidine 78 and methionine 114–glutamate 115 each bind substrate. Aspartate 129 is a catalytic residue.

This sequence belongs to the MoaC family. In terms of assembly, homohexamer; trimer of dimers.

It carries out the reaction (8S)-3',8-cyclo-7,8-dihydroguanosine 5'-triphosphate = cyclic pyranopterin phosphate + diphosphate. It functions in the pathway cofactor biosynthesis; molybdopterin biosynthesis. Its function is as follows. Catalyzes the conversion of (8S)-3',8-cyclo-7,8-dihydroguanosine 5'-triphosphate to cyclic pyranopterin monophosphate (cPMP). In Clostridium perfringens (strain 13 / Type A), this protein is Cyclic pyranopterin monophosphate synthase.